Reading from the N-terminus, the 111-residue chain is MQETVVFEWGSFDVRTKEKAMKVVCEFPGVTVIDVKERGKLKVTGQFDKFIMTKKLKKICDYVDITAVGPEGQPAQNRNPVKKPEPKVIRGRPYPPQKKTPGKNSDECIIL.

In terms of domain architecture, HMA spans 1–68 (MQETVVFEWG…ICDYVDITAV (68 aa)). Residues 68–111 (VGPEGQPAQNRNPVKKPEPKVIRGRPYPPQKKTPGKNSDECIIL) form a disordered region. Residue C108 is modified to Cysteine methyl ester. Residue C108 is the site of S-farnesyl cysteine attachment. The propeptide at 109–111 (IIL) is removed in mature form.

This sequence belongs to the HIPP family.

Its function is as follows. Probable heavy-metal-binding protein. This chain is Heavy metal-associated isoprenylated plant protein 10, found in Arabidopsis thaliana (Mouse-ear cress).